A 199-amino-acid polypeptide reads, in one-letter code: Recombination protein RecR (199 aa).

The segment at 58-73 (CSACGNVDTQDPCAIC) adopts a C4-type zinc-finger fold. The region spanning 81 to 176 (HILCIVEEVG…SVSRLAHGVP (96 aa)) is the Toprim domain.

It belongs to the RecR family.

Functionally, may play a role in DNA repair. It seems to be involved in an RecBC-independent recombinational process of DNA repair. It may act with RecF and RecO. In Parvibaculum lavamentivorans (strain DS-1 / DSM 13023 / NCIMB 13966), this protein is Recombination protein RecR.